The sequence spans 181 residues: Trafficking protein particle complex subunit 3-like protein (181 aa).

Cys-68 is lipidated: S-palmitoyl cysteine.

It belongs to the TRAPP small subunits family. BET3 subfamily. As to quaternary structure, homodimer. Component of the multisubunit TRAPP (transport protein particle) complex, which includes at least TRAPPC2, TRAPPC2L, TRAPPC3, TRAPPC3L, TRAPPC4, TRAPPC5, TRAPPC8, TRAPPC9, TRAPPC10, TRAPPC11 and TRAPPC12.

The protein localises to the golgi apparatus. Its subcellular location is the cis-Golgi network. It localises to the endoplasmic reticulum. May play a role in vesicular transport from endoplasmic reticulum to Golgi. This Homo sapiens (Human) protein is Trafficking protein particle complex subunit 3-like protein (TRAPPC3L).